Here is a 350-residue protein sequence, read N- to C-terminus: Pro-cathepsin H (350 aa).

The N-terminal stretch at 1–19 (MAQWTLLIVFFCVATAAAG) is a signal peptide. A propeptide spans 20–113 (LSFHDSNPIR…WEEFRSHRLG (94 aa)) (activation peptide). Residue asparagine 117 is glycosylated (N-linked (GlcNAc...) asparagine). Positions 122-132 (LKGNHRITDVV) are cleaved as a propeptide — removed in mature form. Disulfide bonds link cysteine 154–cysteine 197 and cysteine 188–cysteine 230. Residue cysteine 157 is part of the active site. An N-linked (GlcNAc...) asparagine glycan is attached at asparagine 177. A glycan (N-linked (GlcNAc...) asparagine) is linked at asparagine 246. An intrachain disulfide couples cysteine 288 to cysteine 338. Catalysis depends on residues histidine 297 and asparagine 317.

It belongs to the peptidase C1 family. Interacts with KPI104 and KPI106. Composed of a mini chain and a large chain. The large chain may be split into heavy and light chain. All chains are held together by disulfide bonds.

It localises to the vacuole. It is found in the lysosome. It catalyses the reaction Hydrolysis of proteins, acting as an aminopeptidase (notably, cleaving Arg-|-Xaa bonds) as well as an endopeptidase.. Its function is as follows. May play a role in proteolysis leading to mobilization of nitrogen during senescence and starvation. In Medicago truncatula (Barrel medic), this protein is Pro-cathepsin H.